The following is a 78-amino-acid chain: Large ribosomal subunit protein bL28 (78 aa).

The disordered stretch occupies residues 1–21; sequence MSRVCQVTGKSPITGNNVSHA. Over residues 8-21 the composition is skewed to polar residues; that stretch reads TGKSPITGNNVSHA.

It belongs to the bacterial ribosomal protein bL28 family.

The sequence is that of Large ribosomal subunit protein bL28 from Hahella chejuensis (strain KCTC 2396).